Here is a 280-residue protein sequence, read N- to C-terminus: Shikimate dehydrogenase (NADP(+)) (280 aa).

Shikimate contacts are provided by residues 20-22 (SLS) and Thr67. The active-site Proton acceptor is Lys71. Shikimate is bound by residues Asn92 and Asp107. NADP(+) is bound by residues 131–135 (GAGGA) and Gly220. Tyr222 contributes to the shikimate binding site. Position 243 (Gly243) interacts with NADP(+).

The protein belongs to the shikimate dehydrogenase family. As to quaternary structure, homodimer.

It catalyses the reaction shikimate + NADP(+) = 3-dehydroshikimate + NADPH + H(+). Its pathway is metabolic intermediate biosynthesis; chorismate biosynthesis; chorismate from D-erythrose 4-phosphate and phosphoenolpyruvate: step 4/7. Involved in the biosynthesis of the chorismate, which leads to the biosynthesis of aromatic amino acids. Catalyzes the reversible NADPH linked reduction of 3-dehydroshikimate (DHSA) to yield shikimate (SA). This is Shikimate dehydrogenase (NADP(+)) from Maricaulis maris (strain MCS10) (Caulobacter maris).